The primary structure comprises 622 residues: Cilia- and flagella-associated protein 206 (622 aa).

The protein belongs to the CFAP206 family.

The protein localises to the cytoplasm. Its subcellular location is the cytoskeleton. It is found in the cilium axoneme. The protein resides in the cilium basal body. In terms of biological role, essential for sperm motility and is involved in the regulation of the beating frequency of motile cilia on the epithelial cells of the respiratory tract. Required for the establishment of radial spokes in sperm flagella. This chain is Cilia- and flagella-associated protein 206, found in Bos taurus (Bovine).